The sequence spans 405 residues: Threonine synthase (405 aa).

Lys104 bears the N6-(pyridoxal phosphate)lysine mark. Pyridoxal 5'-phosphate-binding positions include Asn130, 231-235 (GNAGN), and Thr369.

This sequence belongs to the threonine synthase family. Homotrimer. It depends on pyridoxal 5'-phosphate as a cofactor.

The catalysed reaction is O-phospho-L-homoserine + H2O = L-threonine + phosphate. Its pathway is amino-acid biosynthesis; L-threonine biosynthesis; L-threonine from L-aspartate: step 5/5. Catalyzes the gamma-elimination of phosphate from L-phosphohomoserine and the beta-addition of water to produce L-threonine. Does not catalyze the conversion of O-acetyl-L-homoserine into threonine. The polypeptide is Threonine synthase (thrC) (Methanosarcina acetivorans (strain ATCC 35395 / DSM 2834 / JCM 12185 / C2A)).